The primary structure comprises 375 residues: Alcohol dehydrogenase 1A (375 aa).

N-acetylserine is present on S2. A Phosphoserine modification is found at S23. A Phosphotyrosine modification is found at Y35. C47 serves as a coordination point for Zn(2+). Residue G48 to H52 coordinates NAD(+). 6 residues coordinate Zn(2+): H68, C98, C101, C104, C112, and C175. NAD(+) is bound by residues G200–G205, D224, K229, I270, V293–V295, A318–Y320, and R370.

The protein belongs to the zinc-containing alcohol dehydrogenase family. Dimer of identical or heterodimer of closely related subunits alpha, beta, or gamma that are encoded by genes ADH1A, ADH1B, and ADH1C, respectively. It depends on Zn(2+) as a cofactor.

Its subcellular location is the cytoplasm. The enzyme catalyses a primary alcohol + NAD(+) = an aldehyde + NADH + H(+). The catalysed reaction is a secondary alcohol + NAD(+) = a ketone + NADH + H(+). It catalyses the reaction butan-1-ol + NAD(+) = butanal + NADH + H(+). It carries out the reaction 1-propanol + NAD(+) = propanal + NADH + H(+). The enzyme catalyses propan-2-ol + NAD(+) = acetone + NADH + H(+). Alcohol dehydrogenase. Oxidizes primary as well as secondary alcohols. Ethanol is a very poor substrate. The polypeptide is Alcohol dehydrogenase 1A (ADH1A) (Macaca mulatta (Rhesus macaque)).